The chain runs to 268 residues: AN1-type zinc finger protein 1 (268 aa).

A2 bears the N-acetylalanine mark. AN1-type zinc fingers lie at residues 4–52 (LDIG…VVKE) and 58–106 (EHKS…VAKP). C10, C15, C25, C28, C33, H36, H42, C44, C64, C69, C79, C82, C87, H90, H96, and C98 together coordinate Zn(2+). The tract at residues 160-260 (QTERTYFQVY…EYLNDEEQFL (101 aa)) is ubiquitin-like.

As to quaternary structure, associates with the 26S proteasome; this association occurs upon exposure to arsenite and is reduced in the presence of ATP. Interacts (via AN1-type 1 and 2 zinc fingers) with PSMD1; this interaction is increased upon arsenite treatment and occurs in an ATP-independent manner. Interacts with PSMC4. Interacts with PSMA1. Interacts (via its ubiquitin-like region) with VCP; this interaction occurs in an arsenite-dependent manner and is necessary for the recruitment of the ubiquitin-selective ATPase VCP to stress granules (SGs).

Its subcellular location is the cytoplasm. The protein localises to the stress granule. In terms of biological role, plays a role in the regulation of cytoplasmic stress granules (SGs) turnover. SGs are dynamic and transient cytoplasmic ribonucleoprotein assemblies important for cellular protein homeostasis when protein production is suspended after acute exogenous stress. Associates with SGs and is involved in the efficient and specific arsenite-induced clearance process of SGs through the recruitment of the ubiquitin-selective ATPase VCP and the 26S proteasome. This process requires both complexes for efficient degradation of damaged ubiquitinated SG proteins during recovery from arsenite stress, and hence avoiding aberrant cytoplasmic SGs degradation via autophagy. In Mus musculus (Mouse), this protein is AN1-type zinc finger protein 1.